The sequence spans 353 residues: Guanine nucleotide-binding protein subunit alpha (353 aa).

A lipid anchor (N-myristoyl glycine) is attached at glycine 2. A lipid anchor (S-palmitoyl cysteine) is attached at cysteine 3. Residues 32–353 enclose the G-alpha domain; that stretch reads NEIKMLLLGA…QENLRLCGLI (322 aa). A G1 motif region spans residues 35 to 48; sequence KMLLLGAGESGKST. Residues glutamate 43, serine 44, glycine 45, lysine 46, serine 47, threonine 48, aspartate 150, leucine 175, threonine 181, glycine 203, asparagine 269, lysine 270, aspartate 272, and alanine 325 each contribute to the GTP site. Serine 47 serves as a coordination point for Mg(2+). A G2 motif region spans residues 173–181; it reads DVLRSRVKT. A Mg(2+)-binding site is contributed by threonine 181. The tract at residues 196–205 is G3 motif; it reads YRMFDVGGQR. The interval 265-272 is G4 motif; the sequence is ILFLNKID. A G5 motif region spans residues 323 to 328; it reads TCATDT.

Belongs to the G-alpha family. G(q) subfamily. G proteins are composed of 3 units; alpha, beta and gamma. The alpha chain contains the guanine nucleotide binding site. Mg(2+) is required as a cofactor.

Guanine nucleotide-binding proteins (G proteins) are involved as modulators or transducers in various transmembrane signaling systems. Involved in the mating pathway. The chain is Guanine nucleotide-binding protein subunit alpha (CGA1) from Cochliobolus heterostrophus (strain C4 / ATCC 48331 / race T) (Southern corn leaf blight fungus).